The following is a 228-amino-acid chain: 7-cyano-7-deazaguanine synthase (228 aa).

9–19 (LSGGPDSTTVL) provides a ligand contact to ATP. The Zn(2+) site is built by cysteine 193, cysteine 203, cysteine 206, and cysteine 209.

Belongs to the QueC family. Zn(2+) is required as a cofactor.

The catalysed reaction is 7-carboxy-7-deazaguanine + NH4(+) + ATP = 7-cyano-7-deazaguanine + ADP + phosphate + H2O + H(+). The protein operates within purine metabolism; 7-cyano-7-deazaguanine biosynthesis. Catalyzes the ATP-dependent conversion of 7-carboxy-7-deazaguanine (CDG) to 7-cyano-7-deazaguanine (preQ(0)). This chain is 7-cyano-7-deazaguanine synthase, found in Rickettsia conorii (strain ATCC VR-613 / Malish 7).